The sequence spans 270 residues: Putative pyruvate, phosphate dikinase regulatory protein (270 aa).

Residue 148–155 (GVSRTSKT) participates in ADP binding.

It belongs to the pyruvate, phosphate/water dikinase regulatory protein family. PDRP subfamily.

It carries out the reaction N(tele)-phospho-L-histidyl/L-threonyl-[pyruvate, phosphate dikinase] + ADP = N(tele)-phospho-L-histidyl/O-phospho-L-threonyl-[pyruvate, phosphate dikinase] + AMP + H(+). It catalyses the reaction N(tele)-phospho-L-histidyl/O-phospho-L-threonyl-[pyruvate, phosphate dikinase] + phosphate + H(+) = N(tele)-phospho-L-histidyl/L-threonyl-[pyruvate, phosphate dikinase] + diphosphate. Functionally, bifunctional serine/threonine kinase and phosphorylase involved in the regulation of the pyruvate, phosphate dikinase (PPDK) by catalyzing its phosphorylation/dephosphorylation. The chain is Putative pyruvate, phosphate dikinase regulatory protein from Bacillus cytotoxicus (strain DSM 22905 / CIP 110041 / 391-98 / NVH 391-98).